Here is a 171-residue protein sequence, read N- to C-terminus: 6,7-dimethyl-8-ribityllumazine synthase (171 aa).

5-amino-6-(D-ribitylamino)uracil-binding positions include phenylalanine 24, 58–60, and 82–84; these read ALE and AVI. Residue 87-88 participates in (2S)-2-hydroxy-3-oxobutyl phosphate binding; the sequence is ET. Histidine 90 functions as the Proton donor in the catalytic mechanism. Asparagine 115 is a 5-amino-6-(D-ribitylamino)uracil binding site. (2S)-2-hydroxy-3-oxobutyl phosphate is bound at residue arginine 129. Residues 150 to 171 are disordered; that stretch reads ALDQLGDDEDEEEDEEDEEERA. A compositionally biased stretch (acidic residues) spans 154-171; that stretch reads LGDDEDEEEDEEDEEERA.

Belongs to the DMRL synthase family.

It carries out the reaction (2S)-2-hydroxy-3-oxobutyl phosphate + 5-amino-6-(D-ribitylamino)uracil = 6,7-dimethyl-8-(1-D-ribityl)lumazine + phosphate + 2 H2O + H(+). The protein operates within cofactor biosynthesis; riboflavin biosynthesis; riboflavin from 2-hydroxy-3-oxobutyl phosphate and 5-amino-6-(D-ribitylamino)uracil: step 1/2. Catalyzes the formation of 6,7-dimethyl-8-ribityllumazine by condensation of 5-amino-6-(D-ribitylamino)uracil with 3,4-dihydroxy-2-butanone 4-phosphate. This is the penultimate step in the biosynthesis of riboflavin. The sequence is that of 6,7-dimethyl-8-ribityllumazine synthase from Burkholderia ambifaria (strain MC40-6).